We begin with the raw amino-acid sequence, 90 residues long: Conotoxin Im6.2 (90 aa).

An N-terminal signal peptide occupies residues 1–18 (MKLTILLLVAALLVLTQA). Residues 19 to 29 (RTERRRVKSRK) constitute a propeptide that is removed on maturation. Cystine bridges form between Cys-61/Cys-75, Cys-68/Cys-79, and Cys-74/Cys-84. Residue Glu-89 is modified to Glutamic acid 1-amide.

It belongs to the conotoxin O2 superfamily. As to expression, expressed by the venom duct.

It is found in the secreted. Its function is as follows. Probable neurotoxin. This Conus imperialis (Imperial cone) protein is Conotoxin Im6.2.